Consider the following 511-residue polypeptide: Early growth response protein 1 (511 aa).

2 disordered regions span residues 133 to 169 and 291 to 312; these read ASIP…LSCS and PSRM…RPYA. Residues 137-169 show a composition bias toward low complexity; it reads SSTSQATHPSSSSTSSIPSSSSSSTSSASLSCS. 3 consecutive C2H2-type zinc fingers follow at residues 311–335, 341–363, and 369–391; these read YACP…IRIH, FQCR…IRTH, and FACE…TKIH. Residues 384–406 are disordered; that stretch reads RKRHTKIHMRQKDKKAEKGATAA. The segment covering 386–396 has biased composition (basic residues); that stretch reads RHTKIHMRQKD.

The protein belongs to the EGR C2H2-type zinc-finger protein family. As to expression, detected in muscle and brain.

It is found in the nucleus. The protein localises to the cytoplasm. In terms of biological role, transcriptional regulator. Recognizes and binds to the DNA sequence 5'-GCG(T/G)GGGCG-3'(EGR-site) in the promoter region of target genes. Binds double-stranded target DNA, irrespective of the cytosine methylation status. Regulates the transcription of numerous target genes, and thereby plays an important role in regulating the response to growth factors, DNA damage, and ischemia. Plays a role in the regulation of cell survival, proliferation and cell death. Mediates responses to ischemia and hypoxia; regulates the expression of proteins that are involved in inflammatory processes. Plays a role in regulating the expression of circadian clock genes. Plays a role in the organization of Muller glia cells in the inner and outer plexiform layers of the retina. The protein is Early growth response protein 1 (egr1) of Danio rerio (Zebrafish).